Reading from the N-terminus, the 269-residue chain is Undecaprenyl-diphosphatase (269 aa).

The next 6 helical transmembrane spans lie at 43 to 63 (KGKV…CWEY), 82 to 102 (FILN…LLHG), 108 to 128 (LFSS…ILLV), 188 to 208 (ATEF…FYDV), 222 to 242 (MFAV…KTLI), and 249 to 269 (DFKG…AYYW).

This sequence belongs to the UppP family.

It is found in the cell inner membrane. The catalysed reaction is di-trans,octa-cis-undecaprenyl diphosphate + H2O = di-trans,octa-cis-undecaprenyl phosphate + phosphate + H(+). Functionally, catalyzes the dephosphorylation of undecaprenyl diphosphate (UPP). Confers resistance to bacitracin. In Methylobacillus flagellatus (strain ATCC 51484 / DSM 6875 / VKM B-1610 / KT), this protein is Undecaprenyl-diphosphatase.